The sequence spans 281 residues: Rhomboid protease AarA (281 aa).

The next 7 membrane-spanning stretches (helical) occupy residues 16-36, 76-96, 105-125, 145-165, 185-205, 208-228, and 233-253; these read FSLGAIALTLTLVLLNIAVYF, MLHSNGTHLAFNCLALFVIGI, FKLLAIYIISGIGAALFSAYW, IGVGASGAIMGIAAASVIYLI, QLYNLIAMIALTLINGLQSGV, AAHIGGAIIGALISIAYILVP, and VANLCITVIAASLLTMMIYLY. The Nucleophile role is filled by Ser150. Residue His210 is the Charge relay system of the active site.

It belongs to the peptidase S54 family.

It is found in the cell membrane. The catalysed reaction is Cleaves type-1 transmembrane domains using a catalytic dyad composed of serine and histidine that are contributed by different transmembrane domains.. Functionally, rhomboid serine protease that catalyzes intramembrane proteolysis. Mediates quorum-sensing and the subsequent regulation of target genes via activation of the Tat protein export system. Catalyzes the proteolytic activation of TatA by removal of its N-terminal extension. In Providencia stuartii, this protein is Rhomboid protease AarA (aarA).